Consider the following 709-residue polypeptide: MGLNLLPIEMDDIRKRLDREPNEIEWRVIDAVWSEHCSYKSSKIFLKSFSIDSPNVIMGIKDWQDAGAVDIGDGWAIVIKVESHNHPSAIDPFNGAATGVGGIIRDIISKGAKPIALMDMIRVGNLKIRKNVWLLKNIIAGIAAYGNSIGVPVVGGELSFDDTYNDNPLVDVAAIGIVRKDKIKPSIVDKAGLKLVLAGLTGIDGLGGASFASRKLSGEDEIGAVQIADPFAGKIILDITLEIADKVEAIKDLGGGGLAVAVTEMANGLGAIVDIEKIPLRVKNMNPADVIISETQERMLYAVEEKNVEEVCKAFEEYEYPCSVIGEITSEPIIKFRYFGKDLVSLPTNALLEPPKFLWPIKNVRKNVEEKNVDLPLESTIYTVLSHPDLVSKEWVYSQFDYEVNTSTVVKPGDANGAVVSLPNGKLLAIKVDGNPDLCSEDAYECGKGIVAEAYRNLATVGARGMVAVDHLQFGDPKKPEVYYTFVEAIRGIGEATRFFNIPIVGGKVSFYNENSQGKPIKPTPLIVMAGLVQGKLLKNRVEDSSYVVLLGYTRKELGGSLLSKIFKVPSQAPKVRLQEDLLSSEVVIDAINEEKITFAKDISRGGLAASLFNIIVHGYGVEISTKSILSDTDNVVENLFSESSGRFVILTNEPEWIVEKSRSKGIVASIIGKVNKKTSILTIDNTDYDLKTIVNNYFNFLEEVIGNG.

The active site involves His-36. 2 residues coordinate ATP: Tyr-39 and Lys-80. Position 82 (Glu-82) interacts with Mg(2+). Substrate contacts are provided by residues 83–86 and Arg-105; that span reads SHNH. His-84 functions as the Proton acceptor in the catalytic mechanism. A Mg(2+)-binding site is contributed by Asp-106. Gln-226 is a binding site for substrate. Mg(2+) is bound at residue Asp-252. 294 to 296 provides a ligand contact to substrate; the sequence is ETQ. ATP contacts are provided by Asp-470 and Gly-507. Ser-510 is a binding site for substrate.

This sequence belongs to the FGAMS family. In terms of assembly, monomer. Part of the FGAM synthase complex composed of 1 PurL, 1 PurQ and 2 PurS subunits.

Its subcellular location is the cytoplasm. It catalyses the reaction N(2)-formyl-N(1)-(5-phospho-beta-D-ribosyl)glycinamide + L-glutamine + ATP + H2O = 2-formamido-N(1)-(5-O-phospho-beta-D-ribosyl)acetamidine + L-glutamate + ADP + phosphate + H(+). Its pathway is purine metabolism; IMP biosynthesis via de novo pathway; 5-amino-1-(5-phospho-D-ribosyl)imidazole from N(2)-formyl-N(1)-(5-phospho-D-ribosyl)glycinamide: step 1/2. Its function is as follows. Part of the phosphoribosylformylglycinamidine synthase complex involved in the purines biosynthetic pathway. Catalyzes the ATP-dependent conversion of formylglycinamide ribonucleotide (FGAR) and glutamine to yield formylglycinamidine ribonucleotide (FGAM) and glutamate. The FGAM synthase complex is composed of three subunits. PurQ produces an ammonia molecule by converting glutamine to glutamate. PurL transfers the ammonia molecule to FGAR to form FGAM in an ATP-dependent manner. PurS interacts with PurQ and PurL and is thought to assist in the transfer of the ammonia molecule from PurQ to PurL. The polypeptide is Phosphoribosylformylglycinamidine synthase subunit PurL (Saccharolobus islandicus (strain M.16.27) (Sulfolobus islandicus)).